A 784-amino-acid polypeptide reads, in one-letter code: Probable leucine-rich repeat receptor-like protein kinase IMK3 (784 aa).

A signal peptide spans 1 to 48; it reads MEFITQNQAITSLSMINTDIDQPKASLRSRFLLHLIICLLFFVPPCSS. Residues 49–409 lie on the Extracellular side of the membrane; sequence QAWDGVVITQ…PSHRNLSTKD (361 aa). Asn-82 carries N-linked (GlcNAc...) asparagine glycosylation. LRR repeat units lie at residues 126 to 148, 150 to 172, 174 to 197, 198 to 220, 222 to 242, 247 to 268, 271 to 294, 295 to 317, 319 to 342, and 343 to 365; these read ALRKLSLHDNNLGGSIPMSLGLI, NLRGVQLFNNRLTGSIPASLGVS, FLQTLDLSNNLLSEIIPPNLADSS, KLLRLNLSFNSLSGQIPVSLSRS, SLQFLALDHNNLSGPILDTWG, NLRVLSLDHNSLSGPFPFSLCN, QLQDFSFSHNRIRGTLPSELSKLT, KLRKMDISGNSVSGHIPETLGNI, SLIHLDLSQNKLTGEIPISISDLE, and SLNFFNVSYNNLSGPVPTLLSQK. 3 N-linked (GlcNAc...) asparagine glycosylation sites follow: Asn-203, Asn-232, and Asn-268. A glycan (N-linked (GlcNAc...) asparagine) is linked at Asn-316. Residues Asn-348, Asn-353, Asn-367, and Asn-404 are each glycosylated (N-linked (GlcNAc...) asparagine). Residues 410-430 form a helical membrane-spanning segment; sequence IILIASGALLIVMLILVCVLC. Residues 431 to 784 are Cytoplasmic-facing; sequence CLLRKKANET…VPEASASTSQ (354 aa). The segment at 441–467 is disordered; sequence KAKGGEAGPGAVAAKTEKGGEAEAGGE. Positions 488–773 constitute a Protein kinase domain; that stretch reads CATAEIMGKS…TTATTSEPLI (286 aa). Residues 494-502 and Lys-516 each bind ATP; that span reads MGKSTYGTV. The disordered stretch occupies residues 760 to 784; that stretch reads RPEETTATTSEPLIDVPEASASTSQ.

Belongs to the protein kinase superfamily. Ser/Thr protein kinase family. As to quaternary structure, interacts with AGL24. In terms of processing, autophosphorylated. As to expression, expressed in meristems, including roots, vegetative, inflorescence and floral meristems, and in embryos.

The protein localises to the cell membrane. It carries out the reaction L-seryl-[protein] + ATP = O-phospho-L-seryl-[protein] + ADP + H(+). The catalysed reaction is L-threonyl-[protein] + ATP = O-phospho-L-threonyl-[protein] + ADP + H(+). Functionally, can phosphorylate AGL24. This Arabidopsis thaliana (Mouse-ear cress) protein is Probable leucine-rich repeat receptor-like protein kinase IMK3 (IMK3).